The sequence spans 876 residues: MPYQSPITFQEPQLTVESLKQQLESFTEYQKQEFFDHHPVTDLVLGRSEYMDLLLHRLWQFFGFDELVEVSLVAVGGYGRGELHPLSDIDLLVLSQQPLSEQVANKISQFLTLLWDLKLEIGHAVRTVEQCAEIGKADLTVATNLQEARLLCGCEETFHRLKMVIHSESFWPSEIFYQAKVREQKERHARYHDTTYNLEPDIKSTPGGLRDIHTLSWVARRHFGATSLYEMSRFGFLTDAEYRELVECQDFLWRVRFALHIELKRYDNRLTFAHQVQVARHLGYFGEGNRGIEMMMKEFFRTLRRVAELNKMLLKIFDKAILNNGEEAEAVIIDDDFQRRGNMIEARKPALFQARPETILDMFLHMASDSTIESVAPATMRQLRTARRRLNKFLHTLPAAREKFIELVRHPNALHKAFSQMHKLGVLAAYLPQWNQIVGQMQFDLFHVYTVDEHSIRLLKHIHLFSDANNHDRHPICCEIYPKIQKKELLILAAIFHDIGKGRGGDHSEIGADEAFDFCIEHGLSKPEAKLVAWLVKNHLLMSVTAQRRDIYDPDVIIEFAKKVRDEERLEYLVCLTVADICATNPELWNSWKRTLLAELFYSTQRALRRGLENPVDVRERIRHNQQMASALLRKEGFSSREIEVLWQRFKADYFLRHTHKQIAWHCTHLLRHEDSSKPLVLLSKKATRGGTEVFIYTKDQAALFATVVAELDRRNLNVHDAQIMASKDGYVLDTFMVLDQNGQAIEEDRHQALIRHLVHVLEDGRPTTQKARRIPRNLQHFKVKTQVDFLPTKSKKRTLMEFVALDTPGLLATVGATFAELNLDLHAAKITTIGERAEDLFILTNAQGTRLNEEEEQHLREKLIEHVAELAPSAQ.

The interval 1 to 332 (MPYQSPITFQ…NNGEEAEAVI (332 aa)) is uridylyltransferase. Residues 333–692 (IDDDFQRRGN…LSKKATRGGT (360 aa)) form a uridylyl-removing region. Residues 451 to 573 (VDEHSIRLLK…VRDEERLEYL (123 aa)) form the HD domain. 2 consecutive ACT domains span residues 693–777 (EVFI…RIPR) and 800–876 (LMEF…PSAQ).

It belongs to the GlnD family. Requires Mg(2+) as cofactor.

It carries out the reaction [protein-PII]-L-tyrosine + UTP = [protein-PII]-uridylyl-L-tyrosine + diphosphate. It catalyses the reaction [protein-PII]-uridylyl-L-tyrosine + H2O = [protein-PII]-L-tyrosine + UMP + H(+). Uridylyltransferase (UTase) activity is inhibited by glutamine, while glutamine activates uridylyl-removing (UR) activity. In terms of biological role, modifies, by uridylylation and deuridylylation, the PII regulatory proteins (GlnB and homologs), in response to the nitrogen status of the cell that GlnD senses through the glutamine level. Under low glutamine levels, catalyzes the conversion of the PII proteins and UTP to PII-UMP and PPi, while under higher glutamine levels, GlnD hydrolyzes PII-UMP to PII and UMP (deuridylylation). Thus, controls uridylylation state and activity of the PII proteins, and plays an important role in the regulation of nitrogen assimilation and metabolism. This Vibrio cholerae serotype O1 (strain ATCC 39315 / El Tor Inaba N16961) protein is Bifunctional uridylyltransferase/uridylyl-removing enzyme.